Here is a 216-residue protein sequence, read N- to C-terminus: Dual specificity protein phosphatase VP2 (216 aa).

The disordered stretch occupies residues 1–50 (MHGNGGQPAAGGSESALSREGQPGPSGAAQGQVISNERSPRRYSTRTING). The span at 21–32 (GQPGPSGAAQGQ) shows a compositional bias: low complexity. Cys-95 serves as the catalytic Phosphocysteine intermediate. Positions 165 to 187 (DREADFTPSEEDGGTTSSDFDED) are disordered. Acidic residues predominate over residues 172–187 (PSEEDGGTTSSDFDED).

This sequence belongs to the gyrovirus protein VP2 family.

It catalyses the reaction O-phospho-L-tyrosyl-[protein] + H2O = L-tyrosyl-[protein] + phosphate. It carries out the reaction O-phospho-L-seryl-[protein] + H2O = L-seryl-[protein] + phosphate. The catalysed reaction is O-phospho-L-threonyl-[protein] + H2O = L-threonyl-[protein] + phosphate. May act as a scaffold protein in virion assembly. May also play a role in intracellular signaling during viral replication. This is Dual specificity protein phosphatase VP2 (VP2) from Gallus gallus (Chicken).